The chain runs to 151 residues: Putative pre-16S rRNA nuclease (151 aa).

It belongs to the YqgF nuclease family.

It localises to the cytoplasm. Functionally, could be a nuclease involved in processing of the 5'-end of pre-16S rRNA. This chain is Putative pre-16S rRNA nuclease, found in Prochlorococcus marinus (strain MIT 9515).